The sequence spans 604 residues: Sulfite reductase [NADPH] flavoprotein alpha-component (604 aa).

The Flavodoxin-like domain maps to 66 to 204; the sequence is VTVLSASQTG…AANAWTDNIA (139 aa). FMN is bound by residues 72-77, 119-122, and 155-164; these read SQTGNA, STQG, and LGDSSYPNFC. Residues 239 to 453 form the FAD-binding FR-type domain; that stretch reads ADPFPAALLA…VERNDGFRLP (215 aa). Residues T327, Q361, 391-394, 409-411, and 424-427 contribute to the FAD site; these read RLYS, TVG, and GGAS. Residues 524–525, 530–534, and D566 each bind NADP(+); these read SR and KIYVQ. Y604 lines the FAD pocket.

It belongs to the NADPH-dependent sulphite reductase flavoprotein subunit CysJ family. This sequence in the N-terminal section; belongs to the flavodoxin family. The protein in the C-terminal section; belongs to the flavoprotein pyridine nucleotide cytochrome reductase family. As to quaternary structure, alpha(8)-beta(8). The alpha component is a flavoprotein, the beta component is a hemoprotein. FAD serves as cofactor. Requires FMN as cofactor.

It catalyses the reaction hydrogen sulfide + 3 NADP(+) + 3 H2O = sulfite + 3 NADPH + 4 H(+). It participates in sulfur metabolism; hydrogen sulfide biosynthesis; hydrogen sulfide from sulfite (NADPH route): step 1/1. Its function is as follows. Component of the sulfite reductase complex that catalyzes the 6-electron reduction of sulfite to sulfide. This is one of several activities required for the biosynthesis of L-cysteine from sulfate. The flavoprotein component catalyzes the electron flow from NADPH -&gt; FAD -&gt; FMN to the hemoprotein component. This chain is Sulfite reductase [NADPH] flavoprotein alpha-component, found in Neisseria meningitidis serogroup C (strain 053442).